The chain runs to 226 residues: Thiopurine S-methyltransferase (226 aa).

The S-adenosyl-L-methionine site is built by Trp-16, Met-51, Glu-72, and Arg-131.

The protein belongs to the class I-like SAM-binding methyltransferase superfamily. TPMT family.

The protein localises to the cytoplasm. The catalysed reaction is S-adenosyl-L-methionine + a thiopurine = S-adenosyl-L-homocysteine + a thiopurine S-methylether.. This is Thiopurine S-methyltransferase from Francisella tularensis subsp. novicida (strain U112).